Reading from the N-terminus, the 227-residue chain is Ribosomal RNA large subunit methyltransferase E (227 aa).

5 residues coordinate S-adenosyl-L-methionine: Gly-78, Trp-80, Asp-103, Asp-119, and Asp-143. Lys-183 (proton acceptor) is an active-site residue.

This sequence belongs to the class I-like SAM-binding methyltransferase superfamily. RNA methyltransferase RlmE family.

It is found in the cytoplasm. It catalyses the reaction uridine(2552) in 23S rRNA + S-adenosyl-L-methionine = 2'-O-methyluridine(2552) in 23S rRNA + S-adenosyl-L-homocysteine + H(+). In terms of biological role, specifically methylates the uridine in position 2552 of 23S rRNA at the 2'-O position of the ribose in the fully assembled 50S ribosomal subunit. The chain is Ribosomal RNA large subunit methyltransferase E from Rickettsia akari (strain Hartford).